A 116-amino-acid polypeptide reads, in one-letter code: UPF0102 protein LBJ_1427 (116 aa).

This sequence belongs to the UPF0102 family.

The polypeptide is UPF0102 protein LBJ_1427 (Leptospira borgpetersenii serovar Hardjo-bovis (strain JB197)).